Reading from the N-terminus, the 229-residue chain is Large ribosomal subunit protein uL1 (229 aa).

It belongs to the universal ribosomal protein uL1 family. In terms of assembly, part of the 50S ribosomal subunit.

Functionally, binds directly to 23S rRNA. The L1 stalk is quite mobile in the ribosome, and is involved in E site tRNA release. In terms of biological role, protein L1 is also a translational repressor protein, it controls the translation of the L11 operon by binding to its mRNA. The protein is Large ribosomal subunit protein uL1 of Listeria monocytogenes serovar 1/2a (strain ATCC BAA-679 / EGD-e).